Here is a 321-residue protein sequence, read N- to C-terminus: Necdin (321 aa).

The disordered stretch occupies residues 1 to 96; sequence MSEQSKDLSD…QPGPAPPAPA (96 aa). The segment covering 20–35 has biased composition (low complexity); sequence SEVHSSPGVSEGVPPS. Positions 98 to 297 constitute an MAGE domain; that stretch reads LVQKAHELMW…QAWPSRYREA (200 aa).

As to quaternary structure, binds to the transactivation domains of E2F1 and p53. Binds also SV40 large T antigen and adenovirus E1A. Interacts with nucleobindin 1 and 2. Almost ubiquitous. Detected in fetal brain, lung, liver and kidney; in adult heart, brain, placenta, lung, liver, skeletal muscle, kidney, pancreas, spleen, thymus, prostate, testis, ovary, small intestine and colon. Not detected in peripheral blood leukocytes. In brain, restricted to post-mitotic neurons.

Its subcellular location is the perikaryon. The protein localises to the nucleus. Its function is as follows. Growth suppressor that facilitates the entry of the cell into cell cycle arrest. Functionally similar to the retinoblastoma protein it binds to and represses the activity of cell-cycle-promoting proteins such as SV40 large T antigen, adenovirus E1A, and the transcription factor E2F. Necdin also interacts with p53 and works in an additive manner to inhibit cell growth. Also functions as a transcription factor and directly binds to specific guanosine-rich DNA sequences. This is Necdin (NDN) from Homo sapiens (Human).